The following is a 155-amino-acid chain: Small ribosomal subunit protein uS7c (155 aa).

Belongs to the universal ribosomal protein uS7 family. In terms of assembly, part of the 30S ribosomal subunit.

Its subcellular location is the plastid. It is found in the chloroplast. Functionally, one of the primary rRNA binding proteins, it binds directly to 16S rRNA where it nucleates assembly of the head domain of the 30S subunit. This Spathiphyllum wallisii (Peace lily) protein is Small ribosomal subunit protein uS7c (rps7).